Consider the following 186-residue polypeptide: EF-hand protein 5 (186 aa).

The disordered stretch occupies residues 1–23 (MSRSKEVSPNLSQQKRGDVRSAG). EF-hand domains lie at 41–76 (SAELQEGYRILTGGQKANIISDKDLFKAIHSCGLHT), 77–112 (SEEEVNDLLRVVHQDERTLGLEFPEFMMLMTKGIDE), 113–148 (ASIAEMRRPFSVLDKAKTGVITKKQFTELFVSSGEH), and 149–186 (SSAEELEELMLLAETSEELEVVDYNKLINELAILLNKM). Ca(2+) is bound by residues E98, D126, and T130.

The chain is EF-hand protein 5 from Leishmania tarentolae (Sauroleishmania tarentolae).